Reading from the N-terminus, the 284-residue chain is GTP cyclohydrolase MptA (284 aa).

It belongs to the GTP cyclohydrolase IV family. In terms of assembly, homodimer. The cofactor is Fe(2+).

It carries out the reaction GTP + H2O = 7,8-dihydroneopterin 2',3'-cyclic phosphate + formate + diphosphate + H(+). It participates in cofactor biosynthesis; 5,6,7,8-tetrahydromethanopterin biosynthesis. Its function is as follows. Converts GTP to 7,8-dihydro-D-neopterin 2',3'-cyclic phosphate, the first intermediate in the biosynthesis of coenzyme methanopterin. This chain is GTP cyclohydrolase MptA, found in Thermoplasma volcanium (strain ATCC 51530 / DSM 4299 / JCM 9571 / NBRC 15438 / GSS1).